Here is a 490-residue protein sequence, read N- to C-terminus: Ketol-acid reductoisomerase (NADP(+)) (490 aa).

The KARI N-terminal Rossmann domain maps to 18 to 208; the sequence is AKCRFMDSSE…GGHKAGVLMS (191 aa). Residues 45-48, arginine 68, arginine 76, serine 78, and 108-110 each bind NADP(+); these read CGAQ and DKQ. Histidine 132 is an active-site residue. NADP(+) is bound at residue glycine 158. 2 consecutive KARI C-terminal knotted domains span residues 209-344 and 345-486; these read SFIA…KTPA and GDVE…MADM. 4 residues coordinate Mg(2+): aspartate 217, glutamate 221, glutamate 389, and glutamate 393. Residue serine 414 coordinates substrate.

The protein belongs to the ketol-acid reductoisomerase family. Mg(2+) is required as a cofactor.

The catalysed reaction is (2R)-2,3-dihydroxy-3-methylbutanoate + NADP(+) = (2S)-2-acetolactate + NADPH + H(+). The enzyme catalyses (2R,3R)-2,3-dihydroxy-3-methylpentanoate + NADP(+) = (S)-2-ethyl-2-hydroxy-3-oxobutanoate + NADPH + H(+). Its pathway is amino-acid biosynthesis; L-isoleucine biosynthesis; L-isoleucine from 2-oxobutanoate: step 2/4. The protein operates within amino-acid biosynthesis; L-valine biosynthesis; L-valine from pyruvate: step 2/4. Involved in the biosynthesis of branched-chain amino acids (BCAA). Catalyzes an alkyl-migration followed by a ketol-acid reduction of (S)-2-acetolactate (S2AL) to yield (R)-2,3-dihydroxy-isovalerate. In the isomerase reaction, S2AL is rearranged via a Mg-dependent methyl migration to produce 3-hydroxy-3-methyl-2-ketobutyrate (HMKB). In the reductase reaction, this 2-ketoacid undergoes a metal-dependent reduction by NADPH to yield (R)-2,3-dihydroxy-isovalerate. The polypeptide is Ketol-acid reductoisomerase (NADP(+)) (Marinomonas sp. (strain MWYL1)).